The sequence spans 409 residues: Nucleoprotein (409 aa).

4 disordered regions span residues 1-31 (MASG…GSSG), 44-84 (LNSP…KGGR), 164-196 (RSGR…EDDL), and 238-258 (VDQV…DDKM). The span at 15–31 (PVIKLGGPKPPKVGSSG) shows a compositional bias: low complexity. The interval 29 to 160 (SSGNVSWFQA…GNFRWDFIPL (132 aa)) is RNA-binding. The CoV N NTD domain maps to 31–156 (GNVSWFQAIK…GGPDGNFRWD (126 aa)). Basic residues predominate over residues 70–84 (YWRRQARFKPGKGGR). Over residues 166-179 (GRSTAASSAASSRA) the composition is skewed to low complexity. Basic and acidic residues-rich tracts occupy residues 180 to 192 (PSRE…RSGS) and 247 to 258 (KGKEGNFGDDKM). 2 positions are modified to phosphoserine; by host: Ser190 and Ser192. A CoV N CTD domain is found at 215 to 331 (TKAKADEMAH…QCVDGVGTRP (117 aa)). Residues 226–333 (RYCKRTIPPN…VDGVGTRPKD (108 aa)) form a dimerization region. A disulfide bridge links Cys320 with Cys323. The tract at residues 326-409 (GVGTRPKDDE…GDSALGENEL (84 aa)) is disordered. A compositionally biased stretch (basic residues) spans 358–367 (QRPKKEKKPK). Residues 368–384 (KQDDEVDKALTSDEERN) are compositionally biased toward basic and acidic residues. Thr378 carries the phosphothreonine; by host modification. Residue Ser379 is modified to Phosphoserine; by host.

This sequence belongs to the gammacoronavirus nucleocapsid protein family. Homooligomer. Both monomeric and oligomeric forms interact with RNA. Interacts with protein M. Interacts with NSP3; this interaction serves to tether the genome to the newly translated replicase-transcriptase complex at a very early stage of infection. ADP-ribosylated. The ADP-ribosylation is retained in the virion during infection. Post-translationally, phosphorylated on serine and threonine residues.

Its subcellular location is the virion. The protein resides in the host endoplasmic reticulum-Golgi intermediate compartment. It localises to the host Golgi apparatus. Its function is as follows. Packages the positive strand viral genome RNA into a helical ribonucleocapsid (RNP) and plays a fundamental role during virion assembly through its interactions with the viral genome and membrane protein M. Plays an important role in enhancing the efficiency of subgenomic viral RNA transcription as well as viral replication. The protein is Nucleoprotein of Gallus gallus (Chicken).